Here is a 398-residue protein sequence, read N- to C-terminus: Succinate--CoA ligase [ADP-forming] subunit beta (398 aa).

The region spanning 9-254 is the ATP-grasp domain; sequence KRLLHEYGAP…ISEEDPKEIE (246 aa). Residues K46, 53–55, E109, A112, and E117 contribute to the ATP site; that span reads GRG. Mg(2+) contacts are provided by N209 and D223. Substrate contacts are provided by residues N274 and 331 to 333; that span reads GIM.

The protein belongs to the succinate/malate CoA ligase beta subunit family. Heterotetramer of two alpha and two beta subunits. The cofactor is Mg(2+).

The enzyme catalyses succinate + ATP + CoA = succinyl-CoA + ADP + phosphate. It catalyses the reaction GTP + succinate + CoA = succinyl-CoA + GDP + phosphate. It participates in carbohydrate metabolism; tricarboxylic acid cycle; succinate from succinyl-CoA (ligase route): step 1/1. In terms of biological role, succinyl-CoA synthetase functions in the citric acid cycle (TCA), coupling the hydrolysis of succinyl-CoA to the synthesis of either ATP or GTP and thus represents the only step of substrate-level phosphorylation in the TCA. The beta subunit provides nucleotide specificity of the enzyme and binds the substrate succinate, while the binding sites for coenzyme A and phosphate are found in the alpha subunit. The protein is Succinate--CoA ligase [ADP-forming] subunit beta of Bartonella bacilliformis (strain ATCC 35685 / KC583 / Herrer 020/F12,63).